The chain runs to 528 residues: Homoserine O-acetyltransferase (528 aa).

The AB hydrolase-1 domain maps to 60 to 245 (LVICHALTGS…AALLTYRSRD (186 aa)). S154 functions as the Nucleophile in the catalytic mechanism. Disordered stretches follow at residues 250–335 (RFGR…VKTQ) and 388–413 (DLSA…DATE). Over residues 273–282 (QETTDPSVPS) the composition is skewed to polar residues. Basic and acidic residues predominate over residues 295-304 (AWREHNDGHR). Residues 389–409 (LSAPSRDTSLSSLSSGLPSSP) are compositionally biased toward low complexity. Catalysis depends on residues D438 and H467.

It belongs to the AB hydrolase superfamily. MetX family.

It localises to the cytoplasm. It carries out the reaction L-homoserine + acetyl-CoA = O-acetyl-L-homoserine + CoA. Its pathway is amino-acid biosynthesis; L-methionine biosynthesis via de novo pathway; O-acetyl-L-homoserine from L-homoserine: step 1/1. Inhibited by 6-carbamoyl-3a,4,5,9b-tetrahydro-3H-cyclopenta[ c]quinoline-4-carboxylic acid (CTCQC). Functionally, commits homoserine to the methionine biosynthesis pathway by catalyzing its O-acetylation. This is Homoserine O-acetyltransferase from Cryptococcus neoformans var. grubii serotype A (strain H99 / ATCC 208821 / CBS 10515 / FGSC 9487) (Filobasidiella neoformans var. grubii).